Here is a 93-residue protein sequence, read N- to C-terminus: UPF0297 protein PEPE_1262 (93 aa).

Belongs to the UPF0297 family.

This is UPF0297 protein PEPE_1262 from Pediococcus pentosaceus (strain ATCC 25745 / CCUG 21536 / LMG 10740 / 183-1w).